The sequence spans 434 residues: Nuclear receptor subfamily 1 group I member 2 (434 aa).

Positions 38–107 (PQICRVCGDK…RLRKCLESGM (70 aa)) form a DNA-binding region, nuclear receptor. 2 NR C4-type zinc fingers span residues 41–61 (CRVCGDKATGYHFNVMTCEGC) and 77–102 (CPFRKGACEITRKTRRQCQACRLRKC). The short motif at 66 to 92 (RRAMKRNARLRCPFRKGACEITRKTRR) is the Bipartite nuclear localization signal element. Residues 108 to 145 (KKEMIMSDAAVEERRALIKRKKRERIGTQPPGVQGLTE) form a hinge region. Residues 146–433 (EQRMMIRELM…LMQELFGITG (288 aa)) form the NR LBD domain. Hyperforin contacts are provided by residues serine 247, 285-288 (QLRF), and histidine 407.

The protein belongs to the nuclear hormone receptor family. NR1 subfamily. As to quaternary structure, heterodimer with RXRA. Interacts with NCOA1. Interacts (via domain NR LBD) with CRY1 and CRY2 in a ligand-dependent manner.

Its subcellular location is the nucleus. Nuclear receptor that binds and is activated by a variety of endogenous and xenobiotic compounds. Transcription factor that activates the transcription of multiple genes involved in the metabolism and secretion of potentially harmful xenobiotics, endogenous compounds and drugs. Response to specific ligands is species-specific, due to differences in the ligand-binding domain. Activated by naturally occurring steroids, such as pregnenolone and progesterone. Binds to a response element in the promoters of the CYP3A4 and ABCB1/MDR1 genes. The chain is Nuclear receptor subfamily 1 group I member 2 (NR1I2) from Macaca mulatta (Rhesus macaque).